A 167-amino-acid polypeptide reads, in one-letter code: Troponin C-akin-1 protein (167 aa).

Substrate is bound at residue 17–20; it reads YGAL. The active-site Proton acceptor is Glu-92.

This sequence belongs to the gamma-glutamylcyclotransferase family. In embryos, expression is seen in heart cells of the dorsal vessel and hindgut visceral mesoderm.

Its function is as follows. Putative gamma-glutamylcyclotransferase. The polypeptide is Troponin C-akin-1 protein (Tina-1) (Drosophila melanogaster (Fruit fly)).